The sequence spans 201 residues: Small ribosomal subunit protein uS4 (201 aa).

A disordered region spans residues 19–41 (LVGGSSAYEKRPYPPGQHGRARI). The region spanning 91–157 (SRLDNVVYRA…LPFEVARETA (67 aa)) is the S4 RNA-binding domain.

The protein belongs to the universal ribosomal protein uS4 family. In terms of assembly, part of the 30S ribosomal subunit. Contacts protein S5. The interaction surface between S4 and S5 is involved in control of translational fidelity.

In terms of biological role, one of the primary rRNA binding proteins, it binds directly to 16S rRNA where it nucleates assembly of the body of the 30S subunit. Functionally, with S5 and S12 plays an important role in translational accuracy. The sequence is that of Small ribosomal subunit protein uS4 from Mycobacteroides abscessus (strain ATCC 19977 / DSM 44196 / CCUG 20993 / CIP 104536 / JCM 13569 / NCTC 13031 / TMC 1543 / L948) (Mycobacterium abscessus).